Here is a 205-residue protein sequence, read N- to C-terminus: MRPLTPRQAEILDLIKRNIADTGMPPTRAEIARRLGFKSANAAEEHLKALAKKGCIEIMPGTSRGIKLTQEEEPEDLGLPLIGQVAAGEPILAQEHVEQHYQVDPSMFRPSADFLLRVRGDSMKDIGILEGDLLAVHKVEQARNGQIVVARVEDDVTVKRFEKRGSTVYLHAENEEYSPIVVDLTTQSLSIEGLAVGVIRNGDWQ.

Residues 28 to 48 constitute a DNA-binding region (H-T-H motif); the sequence is RAEIARRLGFKSANAAEEHLK. Residues Ser122 and Lys159 each act as for autocatalytic cleavage activity in the active site.

This sequence belongs to the peptidase S24 family. In terms of assembly, homodimer.

It catalyses the reaction Hydrolysis of Ala-|-Gly bond in repressor LexA.. Functionally, represses a number of genes involved in the response to DNA damage (SOS response), including recA and lexA. In the presence of single-stranded DNA, RecA interacts with LexA causing an autocatalytic cleavage which disrupts the DNA-binding part of LexA, leading to derepression of the SOS regulon and eventually DNA repair. In Shewanella loihica (strain ATCC BAA-1088 / PV-4), this protein is LexA repressor.